Consider the following 490-residue polypeptide: MSRMAEQQLYIHGGYTSATSGRTFETINPANGNVLATVQAAGREDVDRAVKSAQQGQKIWAAMTAMERSRILRRAVDILRERNDELAKLETLDTGKAYSETSTVDIVTGADVLEYYAGLIPALEGSQIPLRETLFVYTRREPLGVVAGIGAWNYPIQIALWKSAPALAAGNAMIFKPSEVTPLTALKLAEIYSEAGLPDGVFNVLPGVGAETGQYLTEHPGIAKVSFTGGVASGKKVMANSAASSLKEVTMELGGKSPLIVFDDADLDLAADIAMMANFFSSGQVCTNGTRVFVPAKCKAAFEQKILARVERIRAGDVFDPQTNFGPLVSFPHRDNVLRYIVKGKEEGARVLCGGDVLKGDGLDNGAWVAPTVFTDCSDEMTIVREEIFGPVMSILTYESEEEVIRRANDTDYGLAAGIVTADLNRAHRVIHQLEAGICWINTWGESPAEMPVGGYKHSGIGRENGVMTLQSYTQVKSIQVEMAKFQSIF.

Positions 26, 27, and 93 each coordinate K(+). 150 to 152 (GAW) serves as a coordination point for NAD(+). Residue Lys-162 is the Charge relay system of the active site. NAD(+) is bound at residue 176–179 (KPSE). Val-180 contributes to the K(+) binding site. 230–233 (GVAS) contributes to the NAD(+) binding site. Leu-246 is a binding site for K(+). Catalysis depends on Glu-252, which acts as the Proton acceptor. Gly-254, Cys-286, and Glu-387 together coordinate NAD(+). The active-site Nucleophile is the Cys-286. Cys-286 carries the cysteine sulfenic acid (-SOH) modification. Residues Lys-457 and Gly-460 each coordinate K(+). Catalysis depends on Glu-464, which acts as the Charge relay system.

This sequence belongs to the aldehyde dehydrogenase family. In terms of assembly, dimer of dimers. K(+) serves as cofactor.

It carries out the reaction betaine aldehyde + NAD(+) + H2O = glycine betaine + NADH + 2 H(+). It functions in the pathway amine and polyamine biosynthesis; betaine biosynthesis via choline pathway; betaine from betaine aldehyde: step 1/1. Its function is as follows. Involved in the biosynthesis of the osmoprotectant glycine betaine. Catalyzes the irreversible oxidation of betaine aldehyde to the corresponding acid. This Escherichia coli O8 (strain IAI1) protein is Betaine aldehyde dehydrogenase.